A 1108-amino-acid polypeptide reads, in one-letter code: Topless-related protein 3 (1108 aa).

One can recognise a LisH domain in the interval 4–36; the sequence is LSRELVFLILQFLEEEKFKESVHRLEKESGFFF. Residues 34 to 92 enclose the CTLH domain; that stretch reads FFFNTKYFDEKVLAGEWDDVETYLSGFTKVDDNRYSMKIFFEIRKQKYLEALDRQEKAK. Phosphoserine is present on S214. WD repeat units lie at residues 343–383, 405–444, 450–491, 493–534, 583–623, and 628–667; these read HQGS…RLVS, ETPI…DLRQ, AHVG…HFTF, GHDA…SRVD, EFQK…VLTS, and GGLP…RSLR. The interval 706–725 is disordered; sequence HSQMLNGVDPSKSRIDDSTD. The span at 716-725 shows a compositional bias: basic and acidic residues; that stretch reads SKSRIDDSTD. WD repeat units follow at residues 751–790, 818–856, 859–899, 902–941, and 994–1033; these read GSST…QNPS, NLEN…VMTT, PPPP…VKSK, GHQK…KRKS, and SLSA…LRCR. The disordered stretch occupies residues 1084-1108; sequence GMIPPSEAINSPSTTSNQTPEQLQR. Positions 1091–1108 are enriched in polar residues; the sequence is AINSPSTTSNQTPEQLQR.

In terms of assembly, tetramer. Interacts with NINJA/AFPH2. Interacts with SMXL6. Interacts with SPL (via EAR motif). Interacts with SPEAR3/TIE1.

The protein resides in the nucleus. Transcriptional corepressor. Negative regulator of jasmonate responses. The protein is Topless-related protein 3 (TPR3) of Arabidopsis thaliana (Mouse-ear cress).